The chain runs to 243 residues: Uroporphyrinogen-III C-methyltransferase (243 aa).

Residues P12, 88–90 (SGD), 118–119 (ST), M166, and A195 contribute to the S-adenosyl-L-homocysteine site.

This sequence belongs to the precorrin methyltransferase family.

The catalysed reaction is uroporphyrinogen III + 2 S-adenosyl-L-methionine = precorrin-2 + 2 S-adenosyl-L-homocysteine + H(+). The protein operates within cofactor biosynthesis; adenosylcobalamin biosynthesis; precorrin-2 from uroporphyrinogen III: step 1/1. It functions in the pathway porphyrin-containing compound metabolism; siroheme biosynthesis; precorrin-2 from uroporphyrinogen III: step 1/1. In terms of biological role, catalyzes the two successive C-2 and C-7 methylation reactions involved in the conversion of uroporphyrinogen III to precorrin-2 via the intermediate formation of precorrin-1. It is a step in the biosynthesis of both cobalamin (vitamin B12) and siroheme. The chain is Uroporphyrinogen-III C-methyltransferase from Synechococcus elongatus (strain ATCC 33912 / PCC 7942 / FACHB-805) (Anacystis nidulans R2).